A 302-amino-acid polypeptide reads, in one-letter code: Lysosomal thioesterase PPT2 (302 aa).

Positions 1–27 (MLGLCGQRLPAAWVLLLLPFLPLLLLA) are cleaved as a signal peptide. N-linked (GlcNAc...) asparagine glycosylation occurs at asparagine 60. 2 disulfides stabilise this stretch: cysteine 109/cysteine 117 and cysteine 165/cysteine 176. The active-site Nucleophile is the serine 111. Asparagine 190 and asparagine 206 each carry an N-linked (GlcNAc...) asparagine glycan. Aspartate 228 is a catalytic residue. The N-linked (GlcNAc...) asparagine glycan is linked to asparagine 245. Cysteine 276 and cysteine 296 are oxidised to a cystine. Histidine 283 is a catalytic residue. Asparagine 289 is a glycosylation site (N-linked (GlcNAc...) asparagine).

Belongs to the palmitoyl-protein thioesterase family. In terms of tissue distribution, broadly expressed, with highest levels in skeletal muscle.

It is found in the lysosome. The catalysed reaction is hexadecanoyl-CoA + H2O = hexadecanoate + CoA + H(+). It carries out the reaction S-hexadecanoyl-N-acetylcysteamine + H2O = N-acetylcysteamine + hexadecanoate + H(+). Its function is as follows. Catalyzes the cleavage of thioester bonds from S-palmitoyl-CoA or S-palmitoyl-N-acetylcysteamine (unbranched structures) but does not have activity against palmitoylcysteine or palmitoylated proteins, branched structures or bulky head groups. Conversely, hydrolyzes both long and short chain fatty acyl-CoA substrate. In terms of biological role, catalytically inactive due to lack of active site His-283. The chain is Lysosomal thioesterase PPT2 from Homo sapiens (Human).